A 672-amino-acid chain; its full sequence is Flap endonuclease 1 (672 aa).

Positions 1–106 (MGIKGLTKFI…SELEKRGEKR (106 aa)) are N-domain. A Mg(2+)-binding site is contributed by D34. The DNA site is built by R47 and R72. The Mg(2+) site is built by D88, E160, E162, D181, and D183. The tract at residues 124–266 (EIKKQSGRTV…KTAYNLIKEY (143 aa)) is I-domain. Residue E160 participates in DNA binding. Residues G244 and D246 each coordinate DNA. Residue D246 coordinates Mg(2+). The tract at residues 349-357 (TQRRLDNFF) is interaction with PCNA. The segment at 371-610 (ETKKEQTLPA…EDSPNSYNNI (240 aa)) is disordered. 3 stretches are compositionally biased toward basic and acidic residues: residues 413–493 (MKEE…KKSL), 502–526 (DSDK…EKIN), and 535–548 (DHSR…KDNI). The segment covering 549 to 584 (SDINNNNNNNNSSSNNNNISNNHFNSVSSNSTFNSS) has biased composition (low complexity). Residues 587–603 (LKSEDTLKSNSPLKEDS) show a composition bias toward basic and acidic residues.

Belongs to the XPG/RAD2 endonuclease family. FEN1 subfamily. In terms of assembly, interacts with PCNA1 and PCNA2. Three molecules of FEN1 bind to one PCNA trimer with each molecule binding to one PCNA monomer. PCNA stimulates the nuclease activity without altering cleavage specificity. It depends on Mg(2+) as a cofactor. In terms of processing, phosphorylated. Phosphorylation upon DNA damage induces relocalization to the nuclear plasma.

It is found in the nucleus. The protein localises to the nucleolus. It localises to the nucleoplasm. The protein resides in the mitochondrion. Functionally, structure-specific nuclease with 5'-flap endonuclease and 5'-3' exonuclease activities involved in DNA replication and repair. During DNA replication, cleaves the 5'-overhanging flap structure that is generated by displacement synthesis when DNA polymerase encounters the 5'-end of a downstream Okazaki fragment. It enters the flap from the 5'-end and then tracks to cleave the flap base, leaving a nick for ligation. Also involved in the long patch base excision repair (LP-BER) pathway, by cleaving within the apurinic/apyrimidinic (AP) site-terminated flap. Acts as a genome stabilization factor that prevents flaps from equilibrating into structures that lead to duplications and deletions. Also possesses 5'-3' exonuclease activity on nicked or gapped double-stranded DNA, and exhibits RNase H activity. Also involved in replication and repair of rDNA and in repairing mitochondrial DNA. The chain is Flap endonuclease 1 from Plasmodium falciparum (isolate 3D7).